We begin with the raw amino-acid sequence, 503 residues long: GMP synthase [glutamine-hydrolyzing] (503 aa).

The 187-residue stretch at 3-189 (PVLVVDFGSQ…AFLSSFAAPN (187 aa)) folds into the Glutamine amidotransferase type-1 domain. Residue Cys-80 is the Nucleophile of the active site. Catalysis depends on residues His-165 and Glu-167. In terms of domain architecture, GMPS ATP-PPase spans 190-380 (WDPEQTICGT…LGIPKHIVHR (191 aa)). 217–223 (SGGVDSV) contacts ATP.

In terms of assembly, homodimer.

The enzyme catalyses XMP + L-glutamine + ATP + H2O = GMP + L-glutamate + AMP + diphosphate + 2 H(+). It participates in purine metabolism; GMP biosynthesis; GMP from XMP (L-Gln route): step 1/1. Catalyzes the synthesis of GMP from XMP. This Tropheryma whipplei (strain TW08/27) (Whipple's bacillus) protein is GMP synthase [glutamine-hydrolyzing].